Here is a 220-residue protein sequence, read N- to C-terminus: GTP cyclohydrolase 1 (220 aa).

Zn(2+) is bound by residues C109, H112, and C180.

Belongs to the GTP cyclohydrolase I family. Homomer.

The enzyme catalyses GTP + H2O = 7,8-dihydroneopterin 3'-triphosphate + formate + H(+). Its pathway is cofactor biosynthesis; 7,8-dihydroneopterin triphosphate biosynthesis; 7,8-dihydroneopterin triphosphate from GTP: step 1/1. This chain is GTP cyclohydrolase 1, found in Edwardsiella ictaluri (strain 93-146).